Consider the following 217-residue polypeptide: 3-isopropylmalate dehydratase small subunit (217 aa).

It belongs to the LeuD family. LeuD type 1 subfamily. As to quaternary structure, heterodimer of LeuC and LeuD.

The catalysed reaction is (2R,3S)-3-isopropylmalate = (2S)-2-isopropylmalate. Its pathway is amino-acid biosynthesis; L-leucine biosynthesis; L-leucine from 3-methyl-2-oxobutanoate: step 2/4. Catalyzes the isomerization between 2-isopropylmalate and 3-isopropylmalate, via the formation of 2-isopropylmaleate. The protein is 3-isopropylmalate dehydratase small subunit of Paracidovorax citrulli (strain AAC00-1) (Acidovorax citrulli).